The primary structure comprises 459 residues: Chromosomal replication initiator protein DnaA (459 aa).

Residues 1-74 (MMEMPIDNLW…ANVVQSILGH (74 aa)) form a domain I, interacts with DnaA modulators region. The domain II stretch occupies residues 74–117 (HPVEIYITVAKGEEFEEIGGGGEWELPTTNIINETPNQNRQPNT). A domain III, AAA+ region region spans residues 118 to 334 (ELNAKYVFSR…GALTRALAYI (217 aa)). The ATP site is built by glycine 162, glycine 164, lysine 165, and threonine 166. Residues 335 to 459 (SIWGLPMTVA…IKMNSRSRKP (125 aa)) form a domain IV, binds dsDNA region.

The protein belongs to the DnaA family. Oligomerizes as a right-handed, spiral filament on DNA at oriC.

It is found in the cytoplasm. In terms of biological role, plays an essential role in the initiation and regulation of chromosomal replication. ATP-DnaA binds to the origin of replication (oriC) to initiate formation of the DNA replication initiation complex once per cell cycle. Binds the DnaA box (a 9 base pair repeat at the origin) and separates the double-stranded (ds)DNA. Forms a right-handed helical filament on oriC DNA; dsDNA binds to the exterior of the filament while single-stranded (ss)DNA is stabiized in the filament's interior. The ATP-DnaA-oriC complex binds and stabilizes one strand of the AT-rich DNA unwinding element (DUE), permitting loading of DNA polymerase. After initiation quickly degrades to an ADP-DnaA complex that is not apt for DNA replication. Binds acidic phospholipids. This is Chromosomal replication initiator protein DnaA from Nostoc sp. (strain PCC 7120 / SAG 25.82 / UTEX 2576).